Consider the following 706-residue polypeptide: Fatty acid oxidation complex subunit alpha (706 aa).

Residues 1-188 (MEKTFNLTRR…KMGLVNDVVP (188 aa)) form an enoyl-CoA hydratase region. Positions 308–706 (RKVKKAVILG…TMARENVSFF (399 aa)) are 3-hydroxyacyl-CoA dehydrogenase.

In the N-terminal section; belongs to the enoyl-CoA hydratase/isomerase family. It in the central section; belongs to the 3-hydroxyacyl-CoA dehydrogenase family. As to quaternary structure, heterotetramer of two alpha chains (FadJ) and two beta chains (FadI).

The protein localises to the cytoplasm. It carries out the reaction a (3S)-3-hydroxyacyl-CoA = a (2E)-enoyl-CoA + H2O. The enzyme catalyses a 4-saturated-(3S)-3-hydroxyacyl-CoA = a (3E)-enoyl-CoA + H2O. It catalyses the reaction a (3S)-3-hydroxyacyl-CoA + NAD(+) = a 3-oxoacyl-CoA + NADH + H(+). The catalysed reaction is (3S)-3-hydroxybutanoyl-CoA = (3R)-3-hydroxybutanoyl-CoA. It functions in the pathway lipid metabolism; fatty acid beta-oxidation. Its function is as follows. Catalyzes the formation of a hydroxyacyl-CoA by addition of water on enoyl-CoA. Also exhibits 3-hydroxyacyl-CoA epimerase and 3-hydroxyacyl-CoA dehydrogenase activities. The protein is Fatty acid oxidation complex subunit alpha of Shewanella putrefaciens (strain CN-32 / ATCC BAA-453).